Consider the following 401-residue polypeptide: Coenzyme A biosynthesis bifunctional protein CoaBC (401 aa).

The interval 1–190 (MQTLAGKKIL…FQPKPLQDKS (190 aa)) is phosphopantothenoylcysteine decarboxylase. C159 (proton donor) is an active-site residue. The interval 191–401 (ILITAGPTRE…LKQIQTLMGH (211 aa)) is phosphopantothenate--cysteine ligase. Residues D279, K289, 307–310 (PDIV), F326, K340, and K344 contribute to the CTP site.

In the N-terminal section; belongs to the HFCD (homo-oligomeric flavin containing Cys decarboxylase) superfamily. It in the C-terminal section; belongs to the PPC synthetase family. Mg(2+) serves as cofactor. FMN is required as a cofactor.

It catalyses the reaction N-[(R)-4-phosphopantothenoyl]-L-cysteine + H(+) = (R)-4'-phosphopantetheine + CO2. It carries out the reaction (R)-4'-phosphopantothenate + L-cysteine + CTP = N-[(R)-4-phosphopantothenoyl]-L-cysteine + CMP + diphosphate + H(+). Its pathway is cofactor biosynthesis; coenzyme A biosynthesis; CoA from (R)-pantothenate: step 2/5. It participates in cofactor biosynthesis; coenzyme A biosynthesis; CoA from (R)-pantothenate: step 3/5. Its function is as follows. Catalyzes two sequential steps in the biosynthesis of coenzyme A. In the first step cysteine is conjugated to 4'-phosphopantothenate to form 4-phosphopantothenoylcysteine. In the second step the latter compound is decarboxylated to form 4'-phosphopantotheine. The protein is Coenzyme A biosynthesis bifunctional protein CoaBC of Vibrio vulnificus (strain CMCP6).